Reading from the N-terminus, the 993-residue chain is Serine/threonine-protein phosphatase 6 regulatory ankyrin repeat subunit B (993 aa).

ANK repeat units lie at residues 7 to 36 (CEQPPLVQAIFSGDPEEIRMLIHKTEDVNA), 40 to 69 (EKRTPLHVAAFLGDAEIIELLILSGARVNA), 73 to 102 (MWLTPLHRAVASRSEEAVQVLIKHSADVNA), 106 to 135 (NWQTPLHVAAANKAVKCAEVIIPLLSSVNV), 139 to 168 (GGRTALHHAALNGHMEMVNLLLAKGANINA), 172 to 201 (KDRRALHWAAYMGHLDVVALLINHGAEVTC), 205 to 234 (KGYTPLHAAASNGQISVVKHLLNLGVEIDE), 238 to 267 (YGNTALHIACYNGQDAVVNELIDYGANVNQ), 271 to 301 (SGFTPLHFAAASTHGALCLELLVNNGADVNI), 305 to 334 (DGKSPLHMTAVHGRFTRSQTLIQNGGEIDC), 338 to 367 (DGNTPLHVAARHGHELLINTLITSGADTAK), 371 to 400 (HSMFPLHLAALNAHSDCCRKLLSSGFEIDT), 404 to 433 (FGRTCLHAAAAGGNVECIKLLQSSGADFHK), 437 to 466 (CGRTPLHYAAANCHFHCIKALVTTGANVNE), 470 to 498 (WGRTALHYAAASDMDRNKMILGNAHDNSE), 531 to 561 (EGYNSIHYAAAYGHRQCLELLLERTNTGFEE), 566 to 595 (ALKSPLHLAAYNGHHQALEVLLQSLVDLDI), 599 to 628 (KGRTALYLAAFKGHTECVEALVNQGASIFV), 633 to 662 (TKRTPLHASVINGHTLCLRLLLETADNPEV), 669 to 698 (KGQTPLMLAVAYGHIDAVSLLLEKEANVDA), 702 to 731 (VGCTALHRGIMTGHEECVQMLLEQEASILC), 735 to 764 (RGRTPLHYAAARGHATWLNELLQIALSEED), 771 to 800 (QGYTPLHWACYNGNENCIEVLLEQKCFRKF), 803 to 832 (NPFTPLHCAIINGHESCASLLLGAIDPSIV), 838 to 867 (KGRTTLHAAAFGDHAECLQLLLRHDAQVNA), 871 to 901 (SGKTALMMAAENGQAGAVDILVNSAQADLTV), 905 to 934 (DLNTPLHLAISKGHEKCALLILDKIQDESL), and 941 to 970 (ALQTPLHIAARNGLKVVVEELLAKGACVLA). Residues 974 to 993 (NASRSNGPRSPPGTAVRKEE) form a disordered region.

In terms of assembly, protein phosphatase 6 (PP6) holoenzyme is proposed to be a heterotrimeric complex formed by the catalytic subunit, a SAPS domain-containing subunit (PP6R) and an ankyrin repeat-domain containing regulatory subunit (ARS). Interacts with PPP6R1.

Putative regulatory subunit of protein phosphatase 6 (PP6) that may be involved in the recognition of phosphoprotein substrates. This Mus musculus (Mouse) protein is Serine/threonine-protein phosphatase 6 regulatory ankyrin repeat subunit B (Ankrd44).